We begin with the raw amino-acid sequence, 407 residues long: Multifunctional CCA protein (407 aa).

Gly8 and Arg11 together coordinate ATP. Gly8 and Arg11 together coordinate CTP. Mg(2+)-binding residues include Asp21 and Asp23. 3 residues coordinate ATP: Arg91, Arg137, and Arg140. Residues Arg91, Arg137, and Arg140 each contribute to the CTP site. Residues 228-329 (TGIHTLLVAE…VKIFNKLDVW (102 aa)) form the HD domain.

The protein belongs to the tRNA nucleotidyltransferase/poly(A) polymerase family. Bacterial CCA-adding enzyme type 1 subfamily. Monomer. Can also form homodimers and oligomers. Mg(2+) is required as a cofactor. The cofactor is Ni(2+).

The enzyme catalyses a tRNA precursor + 2 CTP + ATP = a tRNA with a 3' CCA end + 3 diphosphate. The catalysed reaction is a tRNA with a 3' CCA end + 2 CTP + ATP = a tRNA with a 3' CCACCA end + 3 diphosphate. Catalyzes the addition and repair of the essential 3'-terminal CCA sequence in tRNAs without using a nucleic acid template. Adds these three nucleotides in the order of C, C, and A to the tRNA nucleotide-73, using CTP and ATP as substrates and producing inorganic pyrophosphate. tRNA 3'-terminal CCA addition is required both for tRNA processing and repair. Also involved in tRNA surveillance by mediating tandem CCA addition to generate a CCACCA at the 3' terminus of unstable tRNAs. While stable tRNAs receive only 3'-terminal CCA, unstable tRNAs are marked with CCACCA and rapidly degraded. The polypeptide is Multifunctional CCA protein (Vibrio vulnificus (strain YJ016)).